Here is a 454-residue protein sequence, read N- to C-terminus: MSLEIVILAAGQGTRMRSALPKVLHPIAGKPMLGHVIDCARQLQPERIHVVIGHGADLVRERMAADDLNFVLQAEQLGTGHAVAQALPFLSADQVLILYGDVPLIQLDTLQRLLAQVTPDQLSLLTVDMLDPTGYGRIVRDDQGAVQAIVEHKDATPAQRQIGEINTGILAVPGKRLADWLGRLSNDNAQGEYYLTDVIAMAVGDGLVVASAQPLDAMEVQGVNDRMQQAQLERHYQRLRAEELMRQGVTLLDPQRLDVRGEISVGRDVLIDVNVVLEGRVVIEDDVHIGPNCVIRDSVLRRGAVIKANSHLEGAELGEGSDAGPFARLRPGSVLGARAHVGNFVELKNARLGEGSKAGHLSYLGDAELGANCNIGAGTITCNYDGANKFRTELGDDVFIGSNNSLVAPLKIGDGATTAAGSTITHEVPAKNLAFGRARQKNLENWKRPEKIKK.

A pyrophosphorylase region spans residues 1–226 (MSLEIVILAA…AMEVQGVNDR (226 aa)). Residues 8–11 (LAAG), lysine 22, glutamine 73, 78–79 (GT), 99–101 (YGD), glycine 136, glutamate 151, asparagine 166, and asparagine 224 each bind UDP-N-acetyl-alpha-D-glucosamine. Aspartate 101 lines the Mg(2+) pocket. Asparagine 224 serves as a coordination point for Mg(2+). Residues 227–247 (MQQAQLERHYQRLRAEELMRQ) form a linker region. An N-acetyltransferase region spans residues 248 to 454 (GVTLLDPQRL…NWKRPEKIKK (207 aa)). UDP-N-acetyl-alpha-D-glucosamine is bound by residues arginine 330 and lysine 348. Histidine 360 functions as the Proton acceptor in the catalytic mechanism. The UDP-N-acetyl-alpha-D-glucosamine site is built by tyrosine 363 and asparagine 374. Acetyl-CoA is bound by residues alanine 377, 383 to 384 (NY), serine 402, alanine 420, and arginine 437.

This sequence in the N-terminal section; belongs to the N-acetylglucosamine-1-phosphate uridyltransferase family. In the C-terminal section; belongs to the transferase hexapeptide repeat family. In terms of assembly, homotrimer. Mg(2+) is required as a cofactor.

The protein resides in the cytoplasm. The enzyme catalyses alpha-D-glucosamine 1-phosphate + acetyl-CoA = N-acetyl-alpha-D-glucosamine 1-phosphate + CoA + H(+). It catalyses the reaction N-acetyl-alpha-D-glucosamine 1-phosphate + UTP + H(+) = UDP-N-acetyl-alpha-D-glucosamine + diphosphate. It participates in nucleotide-sugar biosynthesis; UDP-N-acetyl-alpha-D-glucosamine biosynthesis; N-acetyl-alpha-D-glucosamine 1-phosphate from alpha-D-glucosamine 6-phosphate (route II): step 2/2. Its pathway is nucleotide-sugar biosynthesis; UDP-N-acetyl-alpha-D-glucosamine biosynthesis; UDP-N-acetyl-alpha-D-glucosamine from N-acetyl-alpha-D-glucosamine 1-phosphate: step 1/1. The protein operates within bacterial outer membrane biogenesis; LPS lipid A biosynthesis. In terms of biological role, catalyzes the last two sequential reactions in the de novo biosynthetic pathway for UDP-N-acetylglucosamine (UDP-GlcNAc). The C-terminal domain catalyzes the transfer of acetyl group from acetyl coenzyme A to glucosamine-1-phosphate (GlcN-1-P) to produce N-acetylglucosamine-1-phosphate (GlcNAc-1-P), which is converted into UDP-GlcNAc by the transfer of uridine 5-monophosphate (from uridine 5-triphosphate), a reaction catalyzed by the N-terminal domain. This chain is Bifunctional protein GlmU, found in Pseudomonas aeruginosa (strain LESB58).